A 665-amino-acid chain; its full sequence is Envelope glycoprotein (665 aa).

An N-terminal signal peptide occupies residues 1–33 (MARSTLSKPLKNKVNPRGPLIPLILLMLRGVST). The receptor-binding domain (RBD) stretch occupies residues 34 to 267 (ASPGSSPHQV…RYQNLGPRVP (234 aa)). Residues 34–610 (ASPGSSPHQV…FNRSPWFTTL (577 aa)) lie on the Extracellular side of the membrane. Asparagine 45 carries N-linked (GlcNAc...) asparagine; by host glycosylation. Disulfide bonds link cysteine 79–cysteine 129, cysteine 105–cysteine 118, cysteine 106–cysteine 114, cysteine 152–cysteine 172, and cysteine 164–cysteine 177. Aspartate 117 is a binding site for Zn(2+). N-linked (GlcNAc...) asparagine; by host glycosylation is present at asparagine 199. An intrachain disulfide couples cysteine 209 to cysteine 215. Residues 268 to 309 (IGPNPVLADQQPLSKPKPVKSPSVTKPPSGTPLSPTQLPPAG) are disordered. Low complexity predominate over residues 281 to 299 (SKPKPVKSPSVTKPPSGTP). N-linked (GlcNAc...) asparagine; by host glycosylation is present at asparagine 326. 6 disulfides stabilise this stretch: cysteine 336–cysteine 339, cysteine 336–cysteine 563, cysteine 366–cysteine 420, cysteine 385–cysteine 397, cysteine 427–cysteine 440, and cysteine 555–cysteine 562. The CXXC motif lies at 336–339 (CWLC). Residues asparagine 358 and asparagine 365 are each glycosylated (N-linked (GlcNAc...) asparagine; by host). Residues asparagine 398 and asparagine 434 are each glycosylated (N-linked (GlcNAc...) asparagine; by host). Residues 472-492 (VSLTLALLLGGLTMGGIAAGI) form a fusion peptide region. Residues 500–537 (MATQQFQQLQAAVQDDLREVEKSISNLEKSLTSLSEVV) adopt a coiled-coil conformation. Residues 538–554 (LQNRRGLDLLFLKEGGL) form an immunosuppression region. The short motif at 555–563 (CAALKEECC) is the CX6CC element. The chain crosses the membrane as a helical span at residues 611–631 (ISTIMGPLIVLLMILLFGPCI). Residue cysteine 630 is the site of S-palmitoyl cysteine; by host attachment. Over 632-665 (LNRLVQFVKDRISVVQALVLTQQYHQLKPIEYEP) the chain is Cytoplasmic. A YXXL motif; contains endocytosis signal motif is present at residues 655–658 (YHQL).

The mature envelope protein (Env) consists of a trimer of SU-TM heterodimers attached by a labile interchain disulfide bond. The activated Env consists of SU monomers and TM trimers. In terms of processing, specific enzymatic cleavages in vivo yield mature proteins. Envelope glycoproteins are synthesized as an inactive precursor that is N-glycosylated and processed likely by host cell furin or by a furin-like protease in the Golgi to yield the mature SU and TM proteins. The cleavage site between SU and TM requires the minimal sequence [KR]-X-[KR]-R. The R-peptide is released from the C-terminus of the cytoplasmic tail of the TM protein upon particle formation as a result of proteolytic cleavage by the viral protease. Cleavage of this peptide is required for TM to become fusogenic. The CXXC motif is highly conserved across a broad range of retroviral envelope proteins. It is thought to participate in the formation of a labile disulfide bond possibly with the CX6CC motif present in the transmembrane protein. Isomerization of the intersubunit disulfide bond to an SU intrachain disulfide bond is thought to occur upon receptor recognition in order to allow membrane fusion. Post-translationally, the transmembrane protein is palmitoylated. In terms of processing, the R-peptide is palmitoylated.

The protein resides in the virion membrane. The protein localises to the host cell membrane. In terms of biological role, the surface protein (SU) attaches the virus to the host cell by binding to its receptor. Interaction with HECT ubiquitin ligases activates a thiol in a CXXC motif of the C-terminal domain, where the other Cys residue participates in the formation of the intersubunit disulfide. The activated thiol will attack the disulfide and cause its isomerization into a disulfide isomer within the motif. This leads to SU displacement and TM refolding, and is thought to activate its fusogenic potential by unmasking its fusion peptide. Fusion occurs at the host cell plasma membrane. Its function is as follows. The transmembrane protein (TM) acts as a class I viral fusion protein. Under the current model, the protein has at least 3 conformational states: pre-fusion native state, pre-hairpin intermediate state, and post-fusion hairpin state. During viral and target cell membrane fusion, the coiled coil regions (heptad repeats) assume a trimer-of-hairpins structure, positioning the fusion peptide in close proximity to the C-terminal region of the ectodomain. The formation of this structure appears to drive apposition and subsequent fusion of viral and target cell membranes. Membranes fusion leads to delivery of the nucleocapsid into the cytoplasm. The sequence is that of Envelope glycoprotein (env) from Mus musculus (Mouse).